Reading from the N-terminus, the 557-residue chain is MTTTSEISLQEEYVTDAVDHRGLAARRSNTGRWRAALFIIGVEVAERFAYYGIGSNLISYLTGPLGESTAVAAANVNAWSGIATLLPVLGAFVADAFLGRYRTIIISSLIYVLGLAFLTLSAFLIPNTTEVTSSTSSFLNVLFFFSLYLVAIGQSGHKPCVQAFGADQFDEKDSQEKSDRSSFFNWWYLSLSAGICFAILVVVYIQEEFSWAFGFGIPCVFMVISLVLFVSGRRIYRYSKRRHEEEINPFTRIGRVFFVALKNQRLSSSDLCKVELEANTSPEKQSFFNKALLVPNDSSQGENASKSSDVEDATALIRLIPVWFTTLAYAIPYAQYMTFFTKQGVTMDRTILPGVKIPPASLQVFIGISIVLFVPIYDRVFVPIARLITKEPCGITTLKRIGTGIVLSTITMVIAALVEFKRLETAKEHGLIDQPEATLPMSIWWLIPQYLLLGLADVYTLVGMQEFFYSQVPTELRSIGLALYLSALGVGSLLSSLLISLIDLATGGDAGNSWFNSNLNRAHLDYFYWLLAIVSAVGFFTFLFISKSYIYRRVDRV.

2 helical membrane-spanning segments follow: residues Ala35 to Ser55 and Ala78 to Leu98. Thr103 is modified (phosphothreonine). 10 consecutive transmembrane segments (helical) span residues Ile104–Leu124, Ser133–Gly153, Phe183–Val203, Phe209–Phe229, Ile320–Phe340, Ile357–Tyr377, Ile401–Lys421, Ile443–Gly463, Ile479–Ile499, and Tyr526–Ser546.

It belongs to the major facilitator superfamily. Proton-dependent oligopeptide transporter (POT/PTR) (TC 2.A.17) family. As to expression, expressed in roots.

It is found in the membrane. The polypeptide is Protein NRT1/ PTR FAMILY 5.14 (NPF5.14) (Arabidopsis thaliana (Mouse-ear cress)).